A 336-amino-acid polypeptide reads, in one-letter code: tRNA(Ile)-lysidine synthase (336 aa).

40-45 (SGGQDS) lines the ATP pocket.

The protein belongs to the tRNA(Ile)-lysidine synthase family.

The protein resides in the cytoplasm. It catalyses the reaction cytidine(34) in tRNA(Ile2) + L-lysine + ATP = lysidine(34) in tRNA(Ile2) + AMP + diphosphate + H(+). In terms of biological role, ligates lysine onto the cytidine present at position 34 of the AUA codon-specific tRNA(Ile) that contains the anticodon CAU, in an ATP-dependent manner. Cytidine is converted to lysidine, thus changing the amino acid specificity of the tRNA from methionine to isoleucine. The protein is tRNA(Ile)-lysidine synthase of Prochlorococcus marinus subsp. pastoris (strain CCMP1986 / NIES-2087 / MED4).